The following is a 928-amino-acid chain: Diacylglycerol kinase zeta (928 aa).

Residues 1–14 show a composition bias toward basic and acidic residues; that stretch reads MEPRDGSPEARSSD. Disordered regions lie at residues 1–46 and 59–82; these read MEPR…RRFP and KSGL…SERQ. Residues 15–24 show a composition bias toward low complexity; it reads SESASASSSG. Residues 25 to 37 are compositionally biased toward basic and acidic residues; it reads SERDAGPEPDKAP. 2 Phorbol-ester/DAG-type zinc fingers span residues 98-152 and 172-230; these read HIWF…NFRC and HHWV…EEPC. Residues 251–280 form a disordered region; it reads PQNTLKASKKKKRASFKRKSSKKGPEEGRW. The span at 257 to 272 shows a compositional bias: basic residues; sequence ASKKKKRASFKRKSSK. The tract at residues 259 to 273 is MARCKS homology; sequence KKKKRASFKRKSSKK. Residues 278-416 form a mediates interaction with RASGRP1 region; that stretch reads GRWRPFIIRP…HVEEGNVVQL (139 aa). The DAGKc domain maps to 291-425; that stretch reads PLMKPLLVFV…LDRWDLHAEP (135 aa). The Nuclear export signal motif lies at 361-369; that stretch reads LSTLDQLRL. A Phosphoserine modification is found at serine 705. The segment at 759-788 is disordered; sequence ARPDLPTPTSPLPTSPCSPTPRSLQGDAAP. Over residues 763–777 the composition is skewed to pro residues; sequence LPTPTSPLPTSPCSP. A Phosphoserine modification is found at serine 781. 2 ANK repeats span residues 822 to 852 and 857 to 886; these read QSRT…EILD and NGET…SLMK. Positions 924–928 match the PDZ-binding motif; the sequence is QETAV.

It belongs to the eukaryotic diacylglycerol kinase family. In terms of assembly, interacts (via PDZ-binding motif) with the PDZ domain of the syntrophin SNTG1 and that of SNX27. Interacts with IRS1 in the absence of insulin; insulin stimulation decreases this interaction. Found in a ternary complex with IRS1 and PIP5K1A in the absence of insulin. Interacts with PIP5K1A. Forms a signaling complex with RASGRP1 and HRAS. Post-translationally, phosphorylation of the MARCKS homology domain by PKC reduces nuclear accumulation of DGK-zeta. As to expression, highest levels in brain, and substantial levels in skeletal muscle, heart, and pancreas. In terms of tissue distribution, predominantly expressed in muscle.

It localises to the nucleus. The protein resides in the cytoplasm. Its subcellular location is the cytosol. It is found in the cell membrane. The protein localises to the cell projection. It localises to the lamellipodium. The enzyme catalyses a 1,2-diacyl-sn-glycerol + ATP = a 1,2-diacyl-sn-glycero-3-phosphate + ADP + H(+). The catalysed reaction is a 1-O-alkyl-sn-glycerol + ATP = a 1-O-alkyl-sn-glycero-3-phosphate + ADP + H(+). It carries out the reaction 1-O-alkyl-2-acyl-sn-glycerol + ATP = 1-O-alkyl-2-acyl-sn-glycero-3-phosphate + ADP + H(+). It catalyses the reaction 1,2-didecanoyl-sn-glycerol + ATP = 1,2-didecanoyl-sn-glycero-3-phosphate + ADP + H(+). The enzyme catalyses 1,2-ditetradecanoyl-sn-glycerol + ATP = 1,2-ditetradecanoyl-sn-glycero-3-phosphate + ADP + H(+). The catalysed reaction is 1-hexadecanoyl-2-(9Z-octadecenoyl)-sn-glycerol + ATP = 1-hexadecanoyl-2-(9Z-octadecenoyl)-sn-glycero-3-phosphate + ADP + H(+). It carries out the reaction 1-hexadecanoyl-2-(5Z,8Z,11Z,14Z-eicosatetraenoyl)-sn-glycerol + ATP = 1-hexadecanoyl-2-(5Z,8Z,11Z,14Z-eicosatetraenoyl)-sn-glycero-3-phosphate + ADP + H(+). It catalyses the reaction 1-octadecanoyl-2-(9Z-octadecenoyl)-sn-glycerol + ATP = 1-octadecanoyl-2-(9Z-octadecenoyl)-sn-glycero-3-phosphate + ADP + H(+). The enzyme catalyses 1-octadecanoyl-2-(5Z,8Z,11Z,14Z-eicosatetraenoyl)-sn-glycerol + ATP = 1-octadecanoyl-2-(5Z,8Z,11Z,14Z-eicosatetraenoyl)-sn-glycero-3-phosphate + ADP + H(+). The catalysed reaction is 1-octadecanoyl-2-(4Z,7Z,10Z,13Z,16Z,19Z-docosahexaenoyl)-sn-glycerol + ATP = 1-octadecanoyl-2-(4Z,7Z,10Z,13Z,16Z,19Z-docosahexaenoyl)-sn-glycero-3-phosphate + ADP + H(+). It carries out the reaction 1,2-di-(9Z-octadecenoyl)-sn-glycerol + ATP = 1,2-di-(9Z-octadecenoyl)-sn-glycero-3-phosphate + ADP + H(+). It catalyses the reaction 1-(9Z-octadecenoyl)-2-hexadecanoyl-sn-glycerol + ATP = 1-(9Z)-octadecenoyl-2-hexadecanoyl-sn-glycero-3-phosphate + ADP + H(+). The enzyme catalyses 1-eicosanoyl-2-(5Z,8Z,11Z,14Z)-eicosatetraenoyl-sn-glycerol + ATP = 1-eicosanoyl-2-(5Z,8Z,11Z,14Z)-eicosatetraenoyl-sn-glycero-3-phosphate + ADP + H(+). The catalysed reaction is 1,2-di-(5Z,8Z,11Z,14Z)-eicosatetraenoyl-sn-glycerol + ATP = 1,2-di-(5Z,8Z,11Z,14Z)-eicosatetraenoyl-sn-glycero-3-phosphate + ADP + H(+). It carries out the reaction 1-O-hexadecyl-2-acetyl-sn-glycerol + ATP = 1-O-hexadecyl-2-acetyl-sn-glycero-3-phosphate + ADP + H(+). It catalyses the reaction 1-O-hexadecyl-2-(5Z,8Z,11Z,14Z-eicosatetraenoyl)-sn-glycerol + ATP = 1-O-hexadecyl-2-(5Z,8Z,11Z,14Z-eicosatetraenoyl)-sn-glycero-3-phosphate + ADP + H(+). The enzyme catalyses 1-O-hexadecyl-2-(9Z-octadecenoyl)-sn-glycerol + ATP = 1-O-hexadecyl-2-(9Z-octadecenoyl)-sn-glycero-3-phosphate + ADP + H(+). The catalysed reaction is 1-O-hexadecyl-sn-glycerol + ATP = 1-O-hexadecyl-sn-glycero-3-phosphate + ADP + H(+). It participates in lipid metabolism; glycerolipid metabolism. Activated by 1,2-diacyl-sn-glycero-3-phosphate/phosphatidic acid irrespective of its acyl chain composition. Functionally, diacylglycerol kinase that converts diacylglycerol/DAG into phosphatidic acid/phosphatidate/PA and regulates the respective levels of these two bioactive lipids. Thereby, acts as a central switch between the signaling pathways activated by these second messengers with different cellular targets and opposite effects in numerous biological processes. Also plays an important role in the biosynthesis of complex lipids. Does not exhibit an acyl chain-dependent substrate specificity among diacylglycerol species. Can also phosphorylate 1-alkyl-2-acylglycerol in vitro but less efficiently and with a preference for alkylacylglycerols containing an arachidonoyl group. The biological processes it is involved in include T cell activation since it negatively regulates T-cell receptor signaling which is in part mediated by diacylglycerol. By generating phosphatidic acid, stimulates PIP5KIA activity which regulates actin polymerization. Through the same mechanism could also positively regulate insulin-induced translocation of SLC2A4 to the cell membrane. In terms of biological role, regulates RASGRP1 activity. Its function is as follows. Does not regulate RASGRP1 activity. The sequence is that of Diacylglycerol kinase zeta from Homo sapiens (Human).